Here is a 497-residue protein sequence, read N- to C-terminus: Probable cytosol aminopeptidase (497 aa).

Positions 267 and 272 each coordinate Mn(2+). The active site involves K279. Residues D290, D349, and E351 each contribute to the Mn(2+) site. The active site involves R353.

The protein belongs to the peptidase M17 family. Mn(2+) is required as a cofactor.

It is found in the cytoplasm. It carries out the reaction Release of an N-terminal amino acid, Xaa-|-Yaa-, in which Xaa is preferably Leu, but may be other amino acids including Pro although not Arg or Lys, and Yaa may be Pro. Amino acid amides and methyl esters are also readily hydrolyzed, but rates on arylamides are exceedingly low.. It catalyses the reaction Release of an N-terminal amino acid, preferentially leucine, but not glutamic or aspartic acids.. Functionally, presumably involved in the processing and regular turnover of intracellular proteins. Catalyzes the removal of unsubstituted N-terminal amino acids from various peptides. The sequence is that of Probable cytosol aminopeptidase from Pseudomonas entomophila (strain L48).